Consider the following 294-residue polypeptide: Survival motor neuron protein (294 aa).

Residues 1 to 10 are compositionally biased toward gly residues; that stretch reads MAMSSGGSGS. Positions 1 to 32 are disordered; sequence MAMSSGGSGSGVPEQEDAVLFRRGTGQSDDSD. Ala2 is subject to N-acetylalanine. Residues Ser4, Ser5, and Ser8 each carry the phosphoserine; by PKA modification. The segment at 13–44 is P1 (binding site for GEMIN2); that stretch reads PEQEDAVLFRRGTGQSDDSDIWDDTALIKAYD. The residue at position 25 (Thr25) is a Phosphothreonine. Phosphoserine is present on residues Ser28 and Ser31. Residue Lys51 forms a Glycyl lysine isopeptide (Lys-Gly) (interchain with G-Cter in SUMO2) linkage. Positions 60–88 are disordered; sequence CETSGKSKTTPKRKPAKKNKSQKKNTAAS. Positions 68-82 are enriched in basic residues; that stretch reads TTPKRKPAKKNKSQK. Thr69 is subject to Phosphothreonine. Thr85 bears the Phosphothreonine; by PKA mark. The Tudor domain maps to 91–151; it reads QWKVGDKCSA…LSPICEVANN (61 aa). Positions 97–209 are required for interaction with RPP20/POP7; sequence KCSAIWSEDG…MPGPRLGPGK (113 aa). Residues 156–166 are compositionally biased toward low complexity; it reads AQENENESQVS. The interval 156 to 222 is disordered; sequence AQENENESQV…KFNGPPPPPP (67 aa). Ser187 carries the post-translational modification Phosphoserine; by PKA. A compositionally biased stretch (pro residues) spans 194 to 204; it reads LPPPPPMPGPR. Low complexity predominate over residues 206–215; it reads GPGKPGLKFN. Lys209 is covalently cross-linked (Glycyl lysine isopeptide (Lys-Gly) (interchain with G-Cter in SUMO2)). Positions 240-267 are P2 (binding site for SM B); it reads PPIIPPPPPICPDSLDDADALGSMLISW. The tract at residues 279–294 is required for interaction with SYNCRIP; sequence GFRQNQKEGRCSHSLN.

It belongs to the SMN family. Homooligomer; may form higher order homooligomers in the dimer to octamer range. Part of the core SMN complex that contains SMN1, GEMIN2/SIP1, DDX20/GEMIN3, GEMIN4, GEMIN5, GEMIN6, GEMIN7, GEMIN8 and STRAP/UNRIP. Part of the SMN-Sm complex that contains SMN1, GEMIN2/SIP1, DDX20/GEMIN3, GEMIN4, GEMIN5, GEMIN6, GEMIN7, GEMIN8, STRAP/UNRIP and the Sm proteins SNRPB, SNRPD1, SNRPD2, SNRPD3, SNRPE, SNRPF and SNRPG. Component of an import snRNP complex composed of KPNB1, RNUT1, SMN1 and ZNF259. Interacts with DDX20, FBL, NOLA1, RNUT1, SYNCRIP and with several spliceosomal snRNP core Sm proteins, including SNRPB, SNRPD1, SNRPD2, SNRPD3, SNRPE and ILF3. Interacts with GEMIN2; the interaction is direct. Interacts with GEMIN3; the interaction is direct. Interacts with GEMIN8; the interaction is direct. Interacts with SNRPB; the interaction is direct. Interacts (via Tudor domain) with SNRPD1 (via C-terminus); the interaction is direct. Interacts with SNRPD2; the interaction is direct. Interacts (via Tudor domain) with SNRPD3 (via C-terminus); the interaction is direct. Interacts with SNRPE; the interaction is direct. Interacts with OSTF1, LSM10, LSM11 and RPP20/POP7. Interacts (via C-terminal region) with ZPR1 (via C-terminal region). Interacts (via Tudor domain) with COIL. Interacts with SETX; recruits SETX to POLR2A. Interacts with POLR2A (via the C-terminal domain (CTD)). Interacts with PRMT5. Interacts with XRN2. Interacts (via C-terminus) with FMR1 (via C-terminus); the interaction is direct and occurs in a RNA-independent manner. Interacts (via Tudor domain) with SF3B2 ('Arg-508'-methylated form). Interacts with WRAP53/TCAB1. Interacts (via Tudor domain) with ELAVL4 in an RNA-independent manner; the interaction is required for localization of ELAVL4 to RNA granules. Interacts with FRG1.

Its subcellular location is the nucleus. It localises to the gem. The protein resides in the cajal body. The protein localises to the cytoplasm. It is found in the cytoplasmic granule. Its subcellular location is the perikaryon. It localises to the cell projection. The protein resides in the neuron projection. The protein localises to the axon. It is found in the myofibril. Its subcellular location is the sarcomere. It localises to the z line. Functionally, the SMN complex catalyzes the assembly of small nuclear ribonucleoproteins (snRNPs), the building blocks of the spliceosome, and thereby plays an important role in the splicing of cellular pre-mRNAs. Most spliceosomal snRNPs contain a common set of Sm proteins SNRPB, SNRPD1, SNRPD2, SNRPD3, SNRPE, SNRPF and SNRPG that assemble in a heptameric protein ring on the Sm site of the small nuclear RNA to form the core snRNP (Sm core). In the cytosol, the Sm proteins SNRPD1, SNRPD2, SNRPE, SNRPF and SNRPG are trapped in an inactive 6S pICln-Sm complex by the chaperone CLNS1A that controls the assembly of the core snRNP. To assemble core snRNPs, the SMN complex accepts the trapped 5Sm proteins from CLNS1A forming an intermediate. Binding of snRNA inside 5Sm ultimately triggers eviction of the SMN complex, thereby allowing binding of SNRPD3 and SNRPB to complete assembly of the core snRNP. Within the SMN complex, SMN1 acts as a structural backbone and together with GEMIN2 it gathers the Sm complex subunits. Ensures the correct splicing of U12 intron-containing genes that may be important for normal motor and proprioceptive neurons development. Also required for resolving RNA-DNA hybrids created by RNA polymerase II, that form R-loop in transcription terminal regions, an important step in proper transcription termination. May also play a role in the metabolism of small nucleolar ribonucleoprotein (snoRNPs). This is Survival motor neuron protein (SMN1) from Pongo abelii (Sumatran orangutan).